The following is a 599-amino-acid chain: Flap endonuclease GEN-like 1 (599 aa).

The interval 1–96 is N-domain; the sequence is MGVGGNFWDL…ISRFFRSSGI (96 aa). The segment at 2–95 is XPG-N domain; that stretch reads GVGGNFWDLL…RISRFFRSSG (94 aa). Positions 31, 75, 140, 142, 161, 163, and 213 each coordinate Mg(2+). The XPG-I domain stretch occupies residues 128–213; it reads ELLGIPVLKA…IAISLLVGND (86 aa). The tract at residues 128 to 217 is I-domain; it reads ELLGIPVLKA…LLVGNDYDSG (90 aa). The tract at residues 213–407 is 5'-3' exonuclease domain; sequence DYDSGGVLGI…LLPMLSTIYL (195 aa). 2 disordered regions span residues 522-545 and 559-599; these read RESKKKNVSEEETATPRATTMGVQ and AAGQ…LLFG. 2 stretches are compositionally biased toward polar residues: residues 563-572 and 580-590; these read SIETGGSSKA and ATSTSSSNLTK.

It belongs to the XPG/RAD2 endonuclease family. GEN subfamily. Mg(2+) serves as cofactor.

It is found in the nucleus. In terms of biological role, endonuclease which cleaves flap structures at the junction between single-stranded DNA and double-stranded DNA with a specific cleavage site in the 5' overhang strand exactly one nucleotide 3' of the branch point. Structure- and sequence-specific nuclease that resolves holliday junctions (HJs) by symmetrically oriented incisions in two opposing strands near the junction point, thus leading to ligatable products; HJs are physical links between homologous DNA molecules that arise as central intermediary structures during homologous recombination and repair in meiotic and somatic cells. Structure-specific nuclease with 5'-flap endonuclease activity, preferentially cleaving static flaps 5' overhang strand exactly one nucleotide in the 3' direction of the branch point. Also able to cleave double-stranded flap strand 1 exactly at the branch point. In Arabidopsis thaliana (Mouse-ear cress), this protein is Flap endonuclease GEN-like 1.